Consider the following 300-residue polypeptide: Transcription initiation factor IIB 1 (300 aa).

The segment at 3–34 (GKRVCPVCGSTEFIYDPSRGEIVCKVCGYVIE) adopts a TFIIB-type zinc-finger fold. Residues Cys7, Cys10, Cys26, and Cys29 each contribute to the Zn(2+) site. Tandem repeats lie at residues 114–197 (SELD…ARHL) and 210–291 (DYVN…ELVE).

This sequence belongs to the TFIIB family.

Functionally, stabilizes TBP binding to an archaeal box-A promoter. Also responsible for recruiting RNA polymerase II to the pre-initiation complex (DNA-TBP-TFIIB). In Thermococcus kodakarensis (strain ATCC BAA-918 / JCM 12380 / KOD1) (Pyrococcus kodakaraensis (strain KOD1)), this protein is Transcription initiation factor IIB 1.